The primary structure comprises 565 residues: Proline--tRNA ligase (565 aa).

Belongs to the class-II aminoacyl-tRNA synthetase family. ProS type 1 subfamily. In terms of assembly, homodimer.

The protein resides in the cytoplasm. The catalysed reaction is tRNA(Pro) + L-proline + ATP = L-prolyl-tRNA(Pro) + AMP + diphosphate. Functionally, catalyzes the attachment of proline to tRNA(Pro) in a two-step reaction: proline is first activated by ATP to form Pro-AMP and then transferred to the acceptor end of tRNA(Pro). As ProRS can inadvertently accommodate and process non-cognate amino acids such as alanine and cysteine, to avoid such errors it has two additional distinct editing activities against alanine. One activity is designated as 'pretransfer' editing and involves the tRNA(Pro)-independent hydrolysis of activated Ala-AMP. The other activity is designated 'posttransfer' editing and involves deacylation of mischarged Ala-tRNA(Pro). The misacylated Cys-tRNA(Pro) is not edited by ProRS. This chain is Proline--tRNA ligase, found in Lactobacillus helveticus (strain DPC 4571).